The sequence spans 378 residues: UDP-N-acetylglucosamine--N-acetylmuramyl-(pentapeptide) pyrophosphoryl-undecaprenol N-acetylglucosamine transferase (378 aa).

Residues 24 to 26 (TAG), Asn144, Arg181, Ser215, and Gln310 contribute to the UDP-N-acetyl-alpha-D-glucosamine site.

This sequence belongs to the glycosyltransferase 28 family. MurG subfamily.

The protein localises to the cell membrane. It carries out the reaction di-trans,octa-cis-undecaprenyl diphospho-N-acetyl-alpha-D-muramoyl-L-alanyl-D-glutamyl-meso-2,6-diaminopimeloyl-D-alanyl-D-alanine + UDP-N-acetyl-alpha-D-glucosamine = di-trans,octa-cis-undecaprenyl diphospho-[N-acetyl-alpha-D-glucosaminyl-(1-&gt;4)]-N-acetyl-alpha-D-muramoyl-L-alanyl-D-glutamyl-meso-2,6-diaminopimeloyl-D-alanyl-D-alanine + UDP + H(+). It functions in the pathway cell wall biogenesis; peptidoglycan biosynthesis. Cell wall formation. Catalyzes the transfer of a GlcNAc subunit on undecaprenyl-pyrophosphoryl-MurNAc-pentapeptide (lipid intermediate I) to form undecaprenyl-pyrophosphoryl-MurNAc-(pentapeptide)GlcNAc (lipid intermediate II). This is UDP-N-acetylglucosamine--N-acetylmuramyl-(pentapeptide) pyrophosphoryl-undecaprenol N-acetylglucosamine transferase from Nocardia farcinica (strain IFM 10152).